The chain runs to 149 residues: D-aminoacyl-tRNA deacylase (149 aa).

The Gly-cisPro motif, important for rejection of L-amino acids signature appears at 137–138 (GP).

This sequence belongs to the DTD family. In terms of assembly, homodimer.

It localises to the cytoplasm. The catalysed reaction is glycyl-tRNA(Ala) + H2O = tRNA(Ala) + glycine + H(+). It carries out the reaction a D-aminoacyl-tRNA + H2O = a tRNA + a D-alpha-amino acid + H(+). Functionally, an aminoacyl-tRNA editing enzyme that deacylates mischarged D-aminoacyl-tRNAs. Also deacylates mischarged glycyl-tRNA(Ala), protecting cells against glycine mischarging by AlaRS. Acts via tRNA-based rather than protein-based catalysis; rejects L-amino acids rather than detecting D-amino acids in the active site. By recycling D-aminoacyl-tRNA to D-amino acids and free tRNA molecules, this enzyme counteracts the toxicity associated with the formation of D-aminoacyl-tRNA entities in vivo and helps enforce protein L-homochirality. The sequence is that of D-aminoacyl-tRNA deacylase from Leuconostoc mesenteroides subsp. mesenteroides (strain ATCC 8293 / DSM 20343 / BCRC 11652 / CCM 1803 / JCM 6124 / NCDO 523 / NBRC 100496 / NCIMB 8023 / NCTC 12954 / NRRL B-1118 / 37Y).